The primary structure comprises 134 residues: MARVTVEDCIDKVENRFELVLLASHRARLISQGASITIDRDNDKNPVVALREIADETLSPDDLKEDLIHSLQKHVEVDEPEPDPASMIAAGGAAAADSEEQDDLPETITFDQMSEEELLAGIEGLVPPEKSDDY.

A disordered region spans residues 76–102 (EVDEPEPDPASMIAAGGAAAADSEEQD).

Belongs to the RNA polymerase subunit omega family. As to quaternary structure, the RNAP catalytic core consists of 2 alpha, 1 beta, 1 beta' and 1 omega subunit. When a sigma factor is associated with the core the holoenzyme is formed, which can initiate transcription.

It catalyses the reaction RNA(n) + a ribonucleoside 5'-triphosphate = RNA(n+1) + diphosphate. Promotes RNA polymerase assembly. Latches the N- and C-terminal regions of the beta' subunit thereby facilitating its interaction with the beta and alpha subunits. This is DNA-directed RNA polymerase subunit omega from Rhizobium etli (strain ATCC 51251 / DSM 11541 / JCM 21823 / NBRC 15573 / CFN 42).